The sequence spans 383 residues: S-adenosylmethionine synthase (383 aa).

Residue His15 coordinates ATP. A Mg(2+)-binding site is contributed by Asp17. Glu43 lines the K(+) pocket. The L-methionine site is built by Glu56 and Gln99. The interval 99 to 109 (QSPDINQGVDR) is flexible loop. ATP is bound by residues 164 to 166 (DAK), 230 to 231 (RF), Asp239, 245 to 246 (RK), Ala262, and Lys266. Position 239 (Asp239) interacts with L-methionine. Lys270 provides a ligand contact to L-methionine.

It belongs to the AdoMet synthase family. In terms of assembly, homotetramer; dimer of dimers. The cofactor is Mg(2+). K(+) is required as a cofactor.

Its subcellular location is the cytoplasm. It catalyses the reaction L-methionine + ATP + H2O = S-adenosyl-L-methionine + phosphate + diphosphate. It functions in the pathway amino-acid biosynthesis; S-adenosyl-L-methionine biosynthesis; S-adenosyl-L-methionine from L-methionine: step 1/1. Catalyzes the formation of S-adenosylmethionine (AdoMet) from methionine and ATP. The overall synthetic reaction is composed of two sequential steps, AdoMet formation and the subsequent tripolyphosphate hydrolysis which occurs prior to release of AdoMet from the enzyme. The sequence is that of S-adenosylmethionine synthase from Pectobacterium carotovorum subsp. carotovorum (strain PC1).